Here is a 388-residue protein sequence, read N- to C-terminus: Formate-dependent phosphoribosylglycinamide formyltransferase (388 aa).

N(1)-(5-phospho-beta-D-ribosyl)glycinamide is bound by residues 20–21 and Glu-80; that span reads EL. Residues Arg-112, Lys-153, 158 to 163, 193 to 196, and Glu-201 each bind ATP; these read SSGKGQ and EEFI. One can recognise an ATP-grasp domain in the interval 117–306; that stretch reads RLAFEKLGLR…EFEIHARAIL (190 aa). Mg(2+) is bound by residues Glu-265 and Glu-277. Residues Asp-284, Lys-352, and 359–360 each bind N(1)-(5-phospho-beta-D-ribosyl)glycinamide; that span reads RR.

This sequence belongs to the PurK/PurT family. As to quaternary structure, homodimer.

The catalysed reaction is N(1)-(5-phospho-beta-D-ribosyl)glycinamide + formate + ATP = N(2)-formyl-N(1)-(5-phospho-beta-D-ribosyl)glycinamide + ADP + phosphate + H(+). It functions in the pathway purine metabolism; IMP biosynthesis via de novo pathway; N(2)-formyl-N(1)-(5-phospho-D-ribosyl)glycinamide from N(1)-(5-phospho-D-ribosyl)glycinamide (formate route): step 1/1. Functionally, involved in the de novo purine biosynthesis. Catalyzes the transfer of formate to 5-phospho-ribosyl-glycinamide (GAR), producing 5-phospho-ribosyl-N-formylglycinamide (FGAR). Formate is provided by PurU via hydrolysis of 10-formyl-tetrahydrofolate. The sequence is that of Formate-dependent phosphoribosylglycinamide formyltransferase from Methanococcus maripaludis (strain C7 / ATCC BAA-1331).